The chain runs to 241 residues: Ribonuclease 3 (241 aa).

The RNase III domain maps to 16–144 (HAEFEKKINY…VIGAIFQDGG (129 aa)). Glu57 is a Mg(2+) binding site. Catalysis depends on residues Asp61 and Glu133. Glu133 is a Mg(2+) binding site. A DRBM domain is found at 171 to 240 (DAKSRLQEIL…AALAIKKIES (70 aa)).

The protein belongs to the ribonuclease III family. In terms of assembly, homodimer. Mg(2+) serves as cofactor.

It localises to the cytoplasm. The catalysed reaction is Endonucleolytic cleavage to 5'-phosphomonoester.. In terms of biological role, digests double-stranded RNA. Involved in the processing of primary rRNA transcript to yield the immediate precursors to the large and small rRNAs (23S and 16S). Processes some mRNAs, and tRNAs when they are encoded in the rRNA operon. Processes pre-crRNA and tracrRNA of type II CRISPR loci if present in the organism. The protein is Ribonuclease 3 of Desulfotalea psychrophila (strain LSv54 / DSM 12343).